Here is a 63-residue protein sequence, read N- to C-terminus: Large ribosomal subunit protein uL29 (63 aa).

Belongs to the universal ribosomal protein uL29 family.

In Erwinia tasmaniensis (strain DSM 17950 / CFBP 7177 / CIP 109463 / NCPPB 4357 / Et1/99), this protein is Large ribosomal subunit protein uL29.